Here is a 448-residue protein sequence, read N- to C-terminus: Histidine--tRNA ligase (448 aa).

Belongs to the class-II aminoacyl-tRNA synthetase family. Homodimer.

Its subcellular location is the cytoplasm. The catalysed reaction is tRNA(His) + L-histidine + ATP = L-histidyl-tRNA(His) + AMP + diphosphate + H(+). The chain is Histidine--tRNA ligase from Treponema denticola (strain ATCC 35405 / DSM 14222 / CIP 103919 / JCM 8153 / KCTC 15104).